The chain runs to 411 residues: Putative odorant receptor 59c (411 aa).

At 1-46 (MTKFFFKRLQTAPLDQEVSSLDASDYYYRIAFFLGWTPPKGALLRW) the chain is on the cytoplasmic side. Residues 47-67 (IYSLWTLTTMWLGIVYLPLGL) form a helical membrane-spanning segment. Residues 68 to 86 (SLTYVKHFDRFTPTEFLTS) lie on the Extracellular side of the membrane. The helical transmembrane segment at 87-107 (LQVDINCIGNVIKSCVTYSQM) threads the bilayer. Topologically, residues 108–139 (WRFRRMNELISSLDKRCVTTTQRRIFHKMVAR) are cytoplasmic. Residues 140-160 (VNLIVILFLSTYLGFCFLTLF) traverse the membrane as a helical segment. Topologically, residues 161 to 185 (TSVFAGKAPWQLYNPLVDWRKGHWQ) are extracellular. Residues 186–206 (LWIASILEYCVVSIGTMQELM) traverse the membrane as a helical segment. Over 207–271 (SDTYAIVFIS…QIIRPILSIT (65 aa)) the chain is Cytoplasmic. Residues 272 to 292 (IFAQFMLVGIDLGLAAISILF) traverse the membrane as a helical segment. Topologically, residues 293 to 296 (FPNT) are extracellular. The helical transmembrane segment at 297–317 (IWTIMANVSFIVAICTESFPC) threads the bilayer. Residues 318-369 (CMLCEHLIEDSVHVSNALFHSNWITADRSYKSAVLYFLHRAQQPIQFTAGSI) are Cytoplasmic-facing. The chain crosses the membrane as a helical span at residues 370-390 (FPISVQSNIAVAKFAFTIITI). Residues 391-411 (VNQMNLGEKFFSDRSNGDINP) are Extracellular-facing.

This sequence belongs to the insect chemoreceptor superfamily. Heteromeric odorant receptor channel (TC 1.A.69) family. Or2a subfamily. Interacts with Orco. Complexes exist early in the endomembrane system in olfactory sensory neurons (OSNs), coupling these complexes to the conserved ciliary trafficking pathway. In terms of tissue distribution, expressed in olfactory sensory neurons in the maxillary palp.

Its subcellular location is the cell membrane. Functionally, odorant receptor which mediates acceptance or avoidance behavior, depending on its substrates. The odorant receptor repertoire encodes a large collection of odor stimuli that vary widely in identity, intensity, and duration. May form a complex with Orco to form odorant-sensing units, providing sensitive and prolonged odorant signaling and calcium permeability. This chain is Putative odorant receptor 59c (Or59c), found in Drosophila melanogaster (Fruit fly).